Here is a 62-residue protein sequence, read N- to C-terminus: uncharacterized protein (62 aa).

This is an uncharacterized protein from Dictyostelium discoideum (Social amoeba).